A 33-amino-acid chain; its full sequence is U13-ctenitoxin-Pn1c (33 aa).

Cystine bridges form between Cys3–Cys17, Cys10–Cys21, and Cys16–Cys30.

In terms of tissue distribution, expressed by the venom gland.

The protein localises to the secreted. Functionally, acts as a neurotoxin. In Phoneutria nigriventer (Brazilian armed spider), this protein is U13-ctenitoxin-Pn1c.